Here is a 184-residue protein sequence, read N- to C-terminus: Photosystem I assembly protein Ycf4 (184 aa).

Transmembrane regions (helical) follow at residues 22-42 and 57-77; these read FCWAFILFLGSLGFLLVGTSS and IIFFPQGIVMSFYGIAGLFIS.

It belongs to the Ycf4 family.

It localises to the plastid. It is found in the chloroplast thylakoid membrane. Seems to be required for the assembly of the photosystem I complex. The protein is Photosystem I assembly protein Ycf4 of Lobularia maritima (Sweet alyssum).